The following is a 433-amino-acid chain: 5-methylthioadenosine/S-adenosylhomocysteine deaminase (433 aa).

Positions 67 and 69 each coordinate Zn(2+). Residues Glu-96, Arg-148, and His-187 each contribute to the substrate site. A Zn(2+)-binding site is contributed by His-214. The substrate site is built by Glu-217 and Asp-302. Zn(2+) is bound at residue Asp-302.

This sequence belongs to the metallo-dependent hydrolases superfamily. MTA/SAH deaminase family. Zn(2+) serves as cofactor.

The catalysed reaction is S-adenosyl-L-homocysteine + H2O + H(+) = S-inosyl-L-homocysteine + NH4(+). The enzyme catalyses S-methyl-5'-thioadenosine + H2O + H(+) = S-methyl-5'-thioinosine + NH4(+). Functionally, catalyzes the deamination of 5-methylthioadenosine and S-adenosyl-L-homocysteine into 5-methylthioinosine and S-inosyl-L-homocysteine, respectively. Is also able to deaminate adenosine. This Carboxydothermus hydrogenoformans (strain ATCC BAA-161 / DSM 6008 / Z-2901) protein is 5-methylthioadenosine/S-adenosylhomocysteine deaminase.